Here is a 287-residue protein sequence, read N- to C-terminus: Glycine--tRNA ligase alpha subunit (287 aa).

This sequence belongs to the class-II aminoacyl-tRNA synthetase family. As to quaternary structure, tetramer of two alpha and two beta subunits.

It is found in the cytoplasm. The catalysed reaction is tRNA(Gly) + glycine + ATP = glycyl-tRNA(Gly) + AMP + diphosphate. This Petrotoga mobilis (strain DSM 10674 / SJ95) protein is Glycine--tRNA ligase alpha subunit.